The sequence spans 111 residues: Large ribosomal subunit protein uL22 (111 aa).

Belongs to the universal ribosomal protein uL22 family. Part of the 50S ribosomal subunit.

This protein binds specifically to 23S rRNA; its binding is stimulated by other ribosomal proteins, e.g. L4, L17, and L20. It is important during the early stages of 50S assembly. It makes multiple contacts with different domains of the 23S rRNA in the assembled 50S subunit and ribosome. Functionally, the globular domain of the protein is located near the polypeptide exit tunnel on the outside of the subunit, while an extended beta-hairpin is found that lines the wall of the exit tunnel in the center of the 70S ribosome. The sequence is that of Large ribosomal subunit protein uL22 from Chlamydia abortus (strain DSM 27085 / S26/3) (Chlamydophila abortus).